We begin with the raw amino-acid sequence, 282 residues long: Pantothenate synthetase (282 aa).

30 to 37 (MGALHAGH) is a binding site for ATP. Histidine 37 acts as the Proton donor in catalysis. (R)-pantoate is bound at residue glutamine 61. Glutamine 61 serves as a coordination point for beta-alanine. Residue 147 to 150 (GEKD) participates in ATP binding. Glutamine 153 provides a ligand contact to (R)-pantoate. Residues valine 176 and 184 to 187 (LSSR) each bind ATP.

It belongs to the pantothenate synthetase family. In terms of assembly, homodimer.

It is found in the cytoplasm. It carries out the reaction (R)-pantoate + beta-alanine + ATP = (R)-pantothenate + AMP + diphosphate + H(+). It functions in the pathway cofactor biosynthesis; (R)-pantothenate biosynthesis; (R)-pantothenate from (R)-pantoate and beta-alanine: step 1/1. Functionally, catalyzes the condensation of pantoate with beta-alanine in an ATP-dependent reaction via a pantoyl-adenylate intermediate. The protein is Pantothenate synthetase of Bacteroides thetaiotaomicron (strain ATCC 29148 / DSM 2079 / JCM 5827 / CCUG 10774 / NCTC 10582 / VPI-5482 / E50).